A 370-amino-acid chain; its full sequence is Cytochrome b (370 aa).

4 helical membrane-spanning segments follow: residues 25-45 (FGSM…FLAV), 69-90 (WMMQ…YIHI), 105-125 (WLSG…GYVL), and 170-190 (FFAL…LHIL). Heme b is bound by residues His75 and His89. Heme b contacts are provided by His174 and His188. His193 contacts a ubiquinone. Transmembrane regions (helical) follow at residues 218–238 (YKDM…VSFF), 280–300 (LGGA…PFTH), 312–332 (LMQL…WTAT), and 339–358 (FTTI…ISNP).

This sequence belongs to the cytochrome b family. As to quaternary structure, the cytochrome bc1 complex contains 3 respiratory subunits (MT-CYB, CYC1 and UQCRFS1), 2 core proteins (UQCRC1 and UQCRC2) and probably 6 low-molecular weight proteins. The cofactor is heme b.

It is found in the mitochondrion inner membrane. Its function is as follows. Component of the ubiquinol-cytochrome c reductase complex (complex III or cytochrome b-c1 complex) that is part of the mitochondrial respiratory chain. The b-c1 complex mediates electron transfer from ubiquinol to cytochrome c. Contributes to the generation of a proton gradient across the mitochondrial membrane that is then used for ATP synthesis. This is Cytochrome b (MT-CYB) from Chilabothrus striatus (Haitian boa constrictor).